Reading from the N-terminus, the 306-residue chain is MLKKLSPIFSNITGVVRYQDLAYVASVSDEIQEQNIAHSYVTEWDCGTWCVAGEDDDMLPWEIVSATVVHEPVEQALFLGARGQVFCMGSGDIHEEQLPDGDDAIGGRGNMRGVACIDGVAYACGMDRQVYRRFDENDWRAIDTGARPPAGSEAVVGFEAIGGFGAREIYAVGWDGEIWQYDGKRWQPRESPTNLILTAICCAEDGSVYACGQAGTLLRGRNDHWEIIAQDDVDEDLWSLAWFDGALYVSSATAVYTLVGGHLKEVDFGDEQPQRCFHLSAADGVLWSIAAKDIFSFDGQQWTRID.

In terms of assembly, interacts with Tse7.

Immunity protein that plays a role in preventing early activation of toxin Tse7. Protects thereby cells from Tse7 DNase activity. This Pseudomonas aeruginosa (strain ATCC 15692 / DSM 22644 / CIP 104116 / JCM 14847 / LMG 12228 / 1C / PRS 101 / PAO1) protein is Immune protein Tsi7.